The following is a 297-amino-acid chain: Cyclin-dependent kinase 1 (297 aa).

Residues 4-287 enclose the Protein kinase domain; sequence FEKIEKIGEG…AKDILEHPYF (284 aa). ATP contacts are provided by residues 10–18 and Lys33; that span reads IGEGTYGVV. Thr14 bears the Phosphothreonine mark. Tyr15 is subject to Phosphotyrosine. The active-site Proton acceptor is the Asp128. Tyr160 carries the post-translational modification Phosphotyrosine. Thr161 bears the Phosphothreonine; by CAK mark.

Belongs to the protein kinase superfamily. CMGC Ser/Thr protein kinase family. CDC2/CDKX subfamily. Forms a stable but non-covalent complex with a regulatory subunit and with a cyclin. Component of the Frs-CycA-Cdk1 complex composed of Cdk1, CycA and Z600.

Its subcellular location is the nucleus. It catalyses the reaction L-seryl-[protein] + ATP = O-phospho-L-seryl-[protein] + ADP + H(+). The catalysed reaction is L-threonyl-[protein] + ATP = O-phospho-L-threonyl-[protein] + ADP + H(+). The enzyme catalyses [DNA-directed RNA polymerase] + ATP = phospho-[DNA-directed RNA polymerase] + ADP + H(+). Its activity is regulated as follows. Phosphorylation at Thr-14 or Tyr-15 inactivates the enzyme, while phosphorylation at Thr-161 activates it. Plays a key role in the control of the eukaryotic cell cycle. Required for entry into S-phase and mitosis. In embryos, promotes the release of Rif1 from chromatin during mid-blastula transition. p34 is a component of the kinase complex that phosphorylates the repetitive C-terminus of RNA polymerase II. The chain is Cyclin-dependent kinase 1 from Drosophila melanogaster (Fruit fly).